Here is a 484-residue protein sequence, read N- to C-terminus: Glutamate--tRNA ligase (484 aa).

The 'HIGH' region motif lies at 11–21 (PSPTGYLHIGN). Positions 252–256 (KLSKR) match the 'KMSKS' region motif. Residue Lys255 coordinates ATP.

The protein belongs to the class-I aminoacyl-tRNA synthetase family. Glutamate--tRNA ligase type 1 subfamily. As to quaternary structure, monomer.

It localises to the cytoplasm. It catalyses the reaction tRNA(Glu) + L-glutamate + ATP = L-glutamyl-tRNA(Glu) + AMP + diphosphate. Functionally, catalyzes the attachment of glutamate to tRNA(Glu) in a two-step reaction: glutamate is first activated by ATP to form Glu-AMP and then transferred to the acceptor end of tRNA(Glu). The chain is Glutamate--tRNA ligase from Staphylococcus aureus (strain bovine RF122 / ET3-1).